Consider the following 806-residue polypeptide: Sperm head and tail associated protein (806 aa).

Disordered stretches follow at residues M1 to C36, T257 to S329, L428 to P496, and S707 to K806. The span at A13–S27 shows a compositional bias: polar residues. Residues P277–P290 show a composition bias toward low complexity. The segment covering L320 to S329 has biased composition (polar residues). The segment at K521–K806 is interaction with CRISP2. Composition is skewed to low complexity over residues N710–S723 and R733–Q754. A compositionally biased stretch (polar residues) spans Q773 to S788.

In terms of assembly, interacts with CRISP2. Isoforms 3 and 4 are expressed in testis (at protein level).

The protein localises to the cytoplasm. In terms of biological role, plays a role during spermatogenesis. The chain is Sperm head and tail associated protein (Nsun4) from Mus musculus (Mouse).